A 40-amino-acid polypeptide reads, in one-letter code: Dermonecrotic toxin LgSicTox-alphaI-1 (40 aa).

Residues glutamate 32 and aspartate 34 each contribute to the Mg(2+) site.

The protein belongs to the arthropod phospholipase D family. Class II subfamily. It depends on Mg(2+) as a cofactor. Contains 2 disulfide bonds. Expressed by the venom gland.

It localises to the secreted. It carries out the reaction an N-(acyl)-sphingosylphosphocholine = an N-(acyl)-sphingosyl-1,3-cyclic phosphate + choline. The enzyme catalyses an N-(acyl)-sphingosylphosphoethanolamine = an N-(acyl)-sphingosyl-1,3-cyclic phosphate + ethanolamine. The catalysed reaction is a 1-acyl-sn-glycero-3-phosphocholine = a 1-acyl-sn-glycero-2,3-cyclic phosphate + choline. It catalyses the reaction a 1-acyl-sn-glycero-3-phosphoethanolamine = a 1-acyl-sn-glycero-2,3-cyclic phosphate + ethanolamine. Its function is as follows. Dermonecrotic toxins cleave the phosphodiester linkage between the phosphate and headgroup of certain phospholipids (sphingolipid and lysolipid substrates), forming an alcohol (often choline) and a cyclic phosphate. This toxin acts on sphingomyelin (SM). It may also act on ceramide phosphoethanolamine (CPE), lysophosphatidylcholine (LPC) and lysophosphatidylethanolamine (LPE), but not on lysophosphatidylserine (LPS), and lysophosphatidylglycerol (LPG). It acts by transphosphatidylation, releasing exclusively cyclic phosphate products as second products. In vivo, intradermal injection induces dermonecrosis. Induces, hemolysis, vascular permeability, edema, inflammatory response, and platelet aggregation. This chain is Dermonecrotic toxin LgSicTox-alphaI-1, found in Loxosceles gaucho (Spider).